Consider the following 247-residue polypeptide: Trypsin-4 (247 aa).

The signal sequence occupies residues 1 to 15 (MKISIFFAFLGAAVA). Positions 16–23 (LPVNDDDK) are cleaved as a propeptide — activation peptide. The 222-residue stretch at 24–245 (IVGGYTCPKH…YLSWIQETMA (222 aa)) folds into the Peptidase S1 domain. Cystine bridges form between Cys30–Cys161, Cys49–Cys65, Cys133–Cys234, Cys140–Cys207, Cys172–Cys186, and Cys197–Cys221. The Charge relay system role is filled by His64. Residues Glu76, Asn78, Val81, and Glu86 each contribute to the Ca(2+) site. The Charge relay system role is filled by Asp108. Ser201 functions as the Charge relay system in the catalytic mechanism.

Belongs to the peptidase S1 family. It depends on Ca(2+) as a cofactor. In terms of processing, proteolytically cleaved and activated by an autocatalytic mechanism. Cleavage by CTRC inhibits autoactivation.

It localises to the secreted. Its subcellular location is the extracellular space. The enzyme catalyses Preferential cleavage: Arg-|-Xaa, Lys-|-Xaa.. With respect to regulation, activated by autocatalytic cleavage. Cleavage by CTRC inhibits autoactivation. Its function is as follows. Serine protease capable of autoactivation. The polypeptide is Trypsin-4 (Rattus norvegicus (Rat)).